The primary structure comprises 614 residues: Subtilin transport ATP-binding protein SpaT (614 aa).

A run of 5 helical transmembrane segments spans residues 34-54 (FLKL…SLYI), 69-89 (VSIV…SELI), 147-167 (IIQA…SIAF), 175-195 (VSLL…KIGQ), and 267-287 (IAVQ…AFAG). Positions 34-320 (FLKLIRFSII…IMTSIYSIYN (287 aa)) constitute an ABC transmembrane type-1 domain. The ABC transporter domain maps to 353–593 (VVFQNVSFIY…CPLYKKMDES (241 aa)). 387–394 (GPNGSGKK) contributes to the ATP binding site.

This sequence belongs to the ABC transporter superfamily.

It is found in the cell membrane. Its function is as follows. Probably implicated in the export process of the lantibiotic subtilin. In Bacillus subtilis, this protein is Subtilin transport ATP-binding protein SpaT (spaT).